The following is a 548-amino-acid chain: CTP synthase (548 aa).

Positions 1–267 are amidoligase domain; it reads MKTKFIFITG…DQKIAIMLQL (267 aa). CTP is bound at residue Ser14. A UTP-binding site is contributed by Ser14. ATP is bound by residues 15–20 and Asp72; that span reads SLGKGL. The Mg(2+) site is built by Asp72 and Glu141. CTP is bound by residues 148-150, 188-193, and Lys224; these read DIE and KTKPTQ. UTP-binding positions include 188 to 193 and Lys224; that span reads KTKPTQ. The 254-residue stretch at 292–545 folds into the Glutamine amidotransferase type-1 domain; that stretch reads TIGIVGKYVD…IKAAGKQAVK (254 aa). An L-glutamine-binding site is contributed by Gly354. Residue Cys381 is the Nucleophile; for glutamine hydrolysis of the active site. Residues 382–385, Glu405, and Arg473 each bind L-glutamine; that span reads LGMQ. Active-site residues include His518 and Glu520.

This sequence belongs to the CTP synthase family. As to quaternary structure, homotetramer.

It catalyses the reaction UTP + L-glutamine + ATP + H2O = CTP + L-glutamate + ADP + phosphate + 2 H(+). The enzyme catalyses L-glutamine + H2O = L-glutamate + NH4(+). The catalysed reaction is UTP + NH4(+) + ATP = CTP + ADP + phosphate + 2 H(+). Its pathway is pyrimidine metabolism; CTP biosynthesis via de novo pathway; CTP from UDP: step 2/2. Its activity is regulated as follows. Allosterically activated by GTP, when glutamine is the substrate; GTP has no effect on the reaction when ammonia is the substrate. The allosteric effector GTP functions by stabilizing the protein conformation that binds the tetrahedral intermediate(s) formed during glutamine hydrolysis. Inhibited by the product CTP, via allosteric rather than competitive inhibition. Catalyzes the ATP-dependent amination of UTP to CTP with either L-glutamine or ammonia as the source of nitrogen. Regulates intracellular CTP levels through interactions with the four ribonucleotide triphosphates. The protein is CTP synthase of Oleidesulfovibrio alaskensis (strain ATCC BAA-1058 / DSM 17464 / G20) (Desulfovibrio alaskensis).